The chain runs to 355 residues: UDP-3-O-acylglucosamine N-acyltransferase (355 aa).

The active-site Proton acceptor is His248.

It belongs to the transferase hexapeptide repeat family. LpxD subfamily. As to quaternary structure, homotrimer.

The enzyme catalyses a UDP-3-O-[(3R)-3-hydroxyacyl]-alpha-D-glucosamine + a (3R)-hydroxyacyl-[ACP] = a UDP-2-N,3-O-bis[(3R)-3-hydroxyacyl]-alpha-D-glucosamine + holo-[ACP] + H(+). It participates in bacterial outer membrane biogenesis; LPS lipid A biosynthesis. In terms of biological role, catalyzes the N-acylation of UDP-3-O-acylglucosamine using 3-hydroxyacyl-ACP as the acyl donor. Is involved in the biosynthesis of lipid A, a phosphorylated glycolipid that anchors the lipopolysaccharide to the outer membrane of the cell. This chain is UDP-3-O-acylglucosamine N-acyltransferase, found in Syntrophobacter fumaroxidans (strain DSM 10017 / MPOB).